Reading from the N-terminus, the 404-residue chain is Probable tRNA sulfurtransferase (404 aa).

The region spanning 60-165 (TAVAESLKQV…EEAAYLSYET (106 aa)) is the THUMP domain. ATP-binding positions include 183 to 184 (ML), 208 to 209 (HF), R265, G287, and Q296.

The protein belongs to the ThiI family.

It localises to the cytoplasm. It catalyses the reaction [ThiI sulfur-carrier protein]-S-sulfanyl-L-cysteine + a uridine in tRNA + 2 reduced [2Fe-2S]-[ferredoxin] + ATP + H(+) = [ThiI sulfur-carrier protein]-L-cysteine + a 4-thiouridine in tRNA + 2 oxidized [2Fe-2S]-[ferredoxin] + AMP + diphosphate. It carries out the reaction [ThiS sulfur-carrier protein]-C-terminal Gly-Gly-AMP + S-sulfanyl-L-cysteinyl-[cysteine desulfurase] + AH2 = [ThiS sulfur-carrier protein]-C-terminal-Gly-aminoethanethioate + L-cysteinyl-[cysteine desulfurase] + A + AMP + 2 H(+). The protein operates within cofactor biosynthesis; thiamine diphosphate biosynthesis. Functionally, catalyzes the ATP-dependent transfer of a sulfur to tRNA to produce 4-thiouridine in position 8 of tRNAs, which functions as a near-UV photosensor. Also catalyzes the transfer of sulfur to the sulfur carrier protein ThiS, forming ThiS-thiocarboxylate. This is a step in the synthesis of thiazole, in the thiamine biosynthesis pathway. The sulfur is donated as persulfide by IscS. This Streptococcus pneumoniae serotype 19F (strain G54) protein is Probable tRNA sulfurtransferase.